A 454-amino-acid polypeptide reads, in one-letter code: uncharacterized protein (454 aa).

This is an uncharacterized protein from Rickettsia prowazekii (strain Madrid E).